The following is a 78-amino-acid chain: U-scoloptoxin(04)-Er1d (78 aa).

A signal peptide spans 1-24 (MTRHLIFAAMLLVCLFVCWNAVGA). A propeptide spanning residues 25 to 28 (RDAR) is cleaved from the precursor.

This sequence belongs to the scoloptoxin-04 family. Post-translationally, contains 2 disulfide bonds. In terms of tissue distribution, expressed by the venom gland.

The protein resides in the secreted. The sequence is that of U-scoloptoxin(04)-Er1d from Ethmostigmus rubripes (Giant centipede).